The primary structure comprises 106 residues: Large ribosomal subunit protein bL21 (106 aa).

Belongs to the bacterial ribosomal protein bL21 family. As to quaternary structure, part of the 50S ribosomal subunit. Contacts protein L20.

This protein binds to 23S rRNA in the presence of protein L20. The protein is Large ribosomal subunit protein bL21 of Xylella fastidiosa (strain 9a5c).